A 144-amino-acid polypeptide reads, in one-letter code: Ribosome-binding factor A (144 aa).

Positions 121-144 are disordered; the sequence is KAQTGVEEPLENTAEGEENPSGGE. Residues 128–138 show a composition bias toward acidic residues; sequence EPLENTAEGEE.

This sequence belongs to the RbfA family. In terms of assembly, monomer. Binds 30S ribosomal subunits, but not 50S ribosomal subunits or 70S ribosomes.

Its subcellular location is the cytoplasm. One of several proteins that assist in the late maturation steps of the functional core of the 30S ribosomal subunit. Associates with free 30S ribosomal subunits (but not with 30S subunits that are part of 70S ribosomes or polysomes). Required for efficient processing of 16S rRNA. May interact with the 5'-terminal helix region of 16S rRNA. This is Ribosome-binding factor A from Synechococcus sp. (strain JA-2-3B'a(2-13)) (Cyanobacteria bacterium Yellowstone B-Prime).